Reading from the N-terminus, the 1770-residue chain is MESQQLHQNPHSQHGSAYASVTSKEVPSNQDPLAVSASNLPEFDRDSTKVNSQEETTPGTSAVPENHHHVSPQPASVPPPQNGQYQQHGMMTPNKAMASNWAHYQQPSMMTCSHYQTSPAYYQPDPHYPLPQYIPPLSTSSPDPIDSQDQHSEVPQAKTKVRNNVLPPHTLTSEENFSTWVKFYIRFLKNSNLGDIIPNDQGEIKRQMTYEEHAYIYNTFQAFAPFHLLPTWVKQILEINYSDILTVLCKSVSKMQTNNQELKDWIALANLEYNGSTSADTFEITVSTIIQRLKENNINVSDRLACQLILKGLSGDFKYLRNQYRTKTNMKLSQLFAEIQLIYDENKIMNLNKPSQYKQHSEYKNVSRTSPNTTNTKVTTRNYHRTNSSKPRAAKAHNIATSSKFSRVNSDHINESTVSSQYLSDDNELSLGQQQKESKPTRTIDSNDELPDHLLIDSGASQTLVRSAHYLHHATPNSEINIVDAQKQDIPINAIGNLHFNFQNGTKTSIKALHTPNIAYDLLSLSELANQNITACFTRNTLERSDGTVLAPIVKHGDFYWLSKKYLIPSHISKLTINNVNKSKSVNKYPYPLIHRMLGHANFRSIQKSLKKNAVTYLKESDIEWSNASTYQCPDCLIGKSTKHRHVKGSRLKYQESYEPFQYLHTDIFGPVHHLPKSAPSYFISFTDEKTRFQWVYPLHDRREESILNVFTSILAFIKNQFNARVLVIQMDRGSEYTNKTLHKFFTNRGITACYTTTADSRAHGVAERLNRTLLNDCRTLLHCSGLPNHLWFSAVEFSTIIRNSLVSPKNDKSARQHAGLAGLDITTILPFGQPVIVNNHNPDSKIHPRGIPGYALHPSRNSYGYIIYLPSLKKTVDTTNYVILQNNQTKLDQFDYDTLTFDDDLNRLTAHNQSFIEQNETEQSYDQNTESDHDYQSEIEINSDPLVNDFSSQSLNPLQLDKEPVQKVRAPKEVDADISEYNILPSTIRSRTPHIINKESTEMGGTIESDTTSPRHSSTFTARNQKRPGSPNDMIDLTSQDRVNYGLENIKTTRLGGTEEPYIQRNSDTNIKYRTTNSTPSIDDRSSNSESTTPIISIETKAVCDNTPSIDTDPPEYRSSDHATPNIMPDKSSKNVTADSILDDLPLPDLTHKSPTDTSDVAKDIPHIHSRQTNSSLGGMDDSNVLTTTKSKKRSLEDNETEIEVSRDTWNNKNMRSLEPPRSKKRINLIAAIKGVKSIKPVRTTLRYDEAITYNKDNKEKDRYVEAYHKEISQLLKMNTWDTNKYYDRNDIDPKKVINSMFIFNKKRDGTHKARFVARGDIQHPDTYDSDMQSNTVHHYALMTSLSIALDNDYYITQLDISSAYLYADIKEELYIRPPPHLGLNDKLLRLRKSLYGLKQSGANWYETIKSYLINCCDMQEVRGWSCVFKNSQVTICLFVDDMILFSKDLNANKKIITTLKKQYDTKIINLGEGDNEIQYDILGLEIKYQRSKYMKLGMEKSLTEKLPKLNVPLNPKGKKLRAPGQPGHYIDQDELEIDEDEYKEKVHEMQKLIGLASYVGYKFRFDLLYYINTLAQHILFPSRQVLDMTYELIQFMWDTRDKQLIWHKNKPTKPDNKLVAISDASYGNQPYYKSQIGNIFLLNGKVIGGKSTKASLTCTSTTEAEIHAVSEAIPLLNNLSHLVQELNKKPIIKGLLTDSRSTISIIKSTNEEKFRNRFFGTKAMRLRDEVSGNNLYVYYIETKKNIADVMTKPLPIKTFKLLTNKWIH.

Polar residues-rich tracts occupy residues 1 to 39 (MESQQLHQNPHSQHGSAYASVTSKEVPSNQDPLAVSASN) and 49 to 60 (KVNSQEETTPGT). Disordered stretches follow at residues 1 to 89 (MESQ…QQHG) and 360 to 449 (HSEY…SNDE). The RNA-binding stretch occupies residues 295-397 (ENNINVSDRL…SSKPRAAKAH (103 aa)). Low complexity predominate over residues 369–381 (TSPNTTNTKVTTR). 2 stretches are compositionally biased toward polar residues: residues 399–408 (IATSSKFSRV) and 415–435 (ESTVSSQYLSDDNELSLGQQQ). The active-site For protease activity; shared with dimeric partner is the Asp-457. Positions 579–636 (NVNKSKSVNKYPYPLIHRMLGHANFRSIQKSLKKNAVTYLKESDIEWSNASTYQCPDC) are integrase-type zinc finger-like. The region spanning 656–831 (ESYEPFQYLH…AGLDITTILP (176 aa)) is the Integrase catalytic domain. Mg(2+) contacts are provided by Asp-667 and Asp-732. 3 disordered regions span residues 1005–1038 (GGTIESDTTSPRHSSTFTARNQKRPGSPNDMIDL), 1059–1135 (TEEP…KSSK), and 1171–1222 (SRQT…LEPP). 2 stretches are compositionally biased toward polar residues: residues 1009-1024 (ESDTTSPRHSSTFTAR) and 1065-1082 (QRNSDTNIKYRTTNSTPS). The short motif at 1193 to 1227 (KKRSLEDNETEIEVSRDTWNNKNMRSLEPPRSKKR) is the Bipartite nuclear localization signal element. The Reverse transcriptase Ty1/copia-type domain occupies 1353–1491 (NDYYITQLDI…DILGLEIKYQ (139 aa)). The Mg(2+) site is built by Asp-1361, Asp-1442, Asp-1443, Asp-1625, Glu-1667, and Asp-1700. In terms of domain architecture, RNase H Ty1/copia-type spans 1625-1767 (DASYGNQPYY…IKTFKLLTNK (143 aa)).

As to quaternary structure, the capsid protein forms a homotrimer, from which the VLPs are assembled. The protease is a homodimer, whose active site consists of two apposed aspartic acid residues. In terms of processing, initially, virus-like particles (VLPs) are composed of the structural unprocessed proteins Gag and Gag-Pol, and also contain the host initiator methionine tRNA (tRNA(i)-Met) which serves as a primer for minus-strand DNA synthesis, and a dimer of genomic Ty RNA. Processing of the polyproteins occurs within the particle and proceeds by an ordered pathway, called maturation. First, the protease (PR) is released by autocatalytic cleavage of the Gag-Pol polyprotein, and this cleavage is a prerequisite for subsequent processing at the remaining sites to release the mature structural and catalytic proteins. Maturation takes place prior to the RT reaction and is required to produce transposition-competent VLPs.

Its subcellular location is the cytoplasm. The protein localises to the nucleus. The enzyme catalyses DNA(n) + a 2'-deoxyribonucleoside 5'-triphosphate = DNA(n+1) + diphosphate. It carries out the reaction Endonucleolytic cleavage to 5'-phosphomonoester.. Functionally, capsid protein (CA) is the structural component of the virus-like particle (VLP), forming the shell that encapsulates the retrotransposons dimeric RNA genome. The particles are assembled from trimer-clustered units and there are holes in the capsid shells that allow for the diffusion of macromolecules. CA also has nucleocapsid-like chaperone activity, promoting primer tRNA(i)-Met annealing to the multipartite primer-binding site (PBS), dimerization of Ty2 RNA and initiation of reverse transcription. The aspartyl protease (PR) mediates the proteolytic cleavages of the Gag and Gag-Pol polyproteins after assembly of the VLP. Its function is as follows. Reverse transcriptase/ribonuclease H (RT) is a multifunctional enzyme that catalyzes the conversion of the retro-elements RNA genome into dsDNA within the VLP. The enzyme displays a DNA polymerase activity that can copy either DNA or RNA templates, and a ribonuclease H (RNase H) activity that cleaves the RNA strand of RNA-DNA heteroduplexes during plus-strand synthesis and hydrolyzes RNA primers. The conversion leads to a linear dsDNA copy of the retrotransposon that includes long terminal repeats (LTRs) at both ends. In terms of biological role, integrase (IN) targets the VLP to the nucleus, where a subparticle preintegration complex (PIC) containing at least integrase and the newly synthesized dsDNA copy of the retrotransposon must transit the nuclear membrane. Once in the nucleus, integrase performs the integration of the dsDNA into the host genome. The protein is Transposon Ty2-DR2 Gag-Pol polyprotein (TY2B-DR2) of Saccharomyces cerevisiae (strain ATCC 204508 / S288c) (Baker's yeast).